Consider the following 399-residue polypeptide: S-adenosylmethionine synthase (399 aa).

Residue His-16 coordinates ATP. Asp-18 is a Mg(2+) binding site. Glu-44 contacts K(+). L-methionine contacts are provided by Glu-57 and Gln-100. Residues Gln-100–Thr-110 are flexible loop. Residues Asp-175–Lys-177, Lys-246–Phe-247, Asp-255, Arg-261–Lys-262, Ala-278, and Lys-282 each bind ATP. L-methionine is bound at residue Asp-255. L-methionine is bound at residue Lys-286. An Isoglutamyl lysine isopeptide (Lys-Gln) (interchain with Q-Cter in protein Pup) cross-link involves residue Lys-341.

The protein belongs to the AdoMet synthase family. As to quaternary structure, homotetramer; dimer of dimers. Requires Mg(2+) as cofactor. The cofactor is K(+).

The protein resides in the cytoplasm. The catalysed reaction is L-methionine + ATP + H2O = S-adenosyl-L-methionine + phosphate + diphosphate. Its pathway is amino-acid biosynthesis; S-adenosyl-L-methionine biosynthesis; S-adenosyl-L-methionine from L-methionine: step 1/1. Its function is as follows. Catalyzes the formation of S-adenosylmethionine (AdoMet) from methionine and ATP. The overall synthetic reaction is composed of two sequential steps, AdoMet formation and the subsequent tripolyphosphate hydrolysis which occurs prior to release of AdoMet from the enzyme. This is S-adenosylmethionine synthase from Mycolicibacterium smegmatis (strain ATCC 700084 / mc(2)155) (Mycobacterium smegmatis).